A 200-amino-acid polypeptide reads, in one-letter code: MLKYPDYISKLISFLKKLPGIGFKSAEKIAFELLEWDPSQVEAMGLAMQEFSASHATCPDCFCLKTSKTSSCDFCSESRDSSFLCIVATPKDVFSFEKSKIFKGRYFVLGNLLSPITGKHLSLEKLNILKQRIEDFAPKEMIIALDATLEGDATALFLKQEFSHLPIKISRLALGMPVGLSFDFIDSNTLARAFSGRNCF.

Residues C58–C75 form a C4-type zinc finger. Positions S82 to P177 constitute a Toprim domain.

It belongs to the RecR family.

May play a role in DNA repair. It seems to be involved in an RecBC-independent recombinational process of DNA repair. It may act with RecF and RecO. This Chlamydia muridarum (strain MoPn / Nigg) protein is Recombination protein RecR.